The sequence spans 135 residues: Small ribosomal subunit protein uS12 (135 aa).

Asp89 is subject to 3-methylthioaspartic acid. Residues Asn108–Lys135 are disordered. Positions Thr111–Ala122 are enriched in basic residues. Residues Lys123–Lys135 are compositionally biased toward basic and acidic residues.

It belongs to the universal ribosomal protein uS12 family. Part of the 30S ribosomal subunit. Contacts proteins S8 and S17. May interact with IF1 in the 30S initiation complex.

With S4 and S5 plays an important role in translational accuracy. In terms of biological role, interacts with and stabilizes bases of the 16S rRNA that are involved in tRNA selection in the A site and with the mRNA backbone. Located at the interface of the 30S and 50S subunits, it traverses the body of the 30S subunit contacting proteins on the other side and probably holding the rRNA structure together. The combined cluster of proteins S8, S12 and S17 appears to hold together the shoulder and platform of the 30S subunit. This chain is Small ribosomal subunit protein uS12, found in Helicobacter pylori (strain HPAG1).